The sequence spans 299 residues: tRNA dimethylallyltransferase (299 aa).

Residue 13-20 participates in ATP binding; that stretch reads GATASGKT. 15 to 20 provides a ligand contact to substrate; the sequence is TASGKT. The segment at 38 to 41 is interaction with substrate tRNA; that stretch reads DSRQ.

This sequence belongs to the IPP transferase family. As to quaternary structure, monomer. Requires Mg(2+) as cofactor.

The catalysed reaction is adenosine(37) in tRNA + dimethylallyl diphosphate = N(6)-dimethylallyladenosine(37) in tRNA + diphosphate. Functionally, catalyzes the transfer of a dimethylallyl group onto the adenine at position 37 in tRNAs that read codons beginning with uridine, leading to the formation of N6-(dimethylallyl)adenosine (i(6)A). This Prochlorococcus marinus (strain MIT 9312) protein is tRNA dimethylallyltransferase.